The primary structure comprises 194 residues: Large ribosomal subunit protein bL9 (194 aa).

The disordered stretch occupies residues 148–194; the sequence is QDEAERQARGENVINSQFEEDRAAEAEAAQDMAEGGAGSFEGDHYEA.

This sequence belongs to the bacterial ribosomal protein bL9 family.

Its function is as follows. Binds to the 23S rRNA. This chain is Large ribosomal subunit protein bL9, found in Caulobacter vibrioides (strain ATCC 19089 / CIP 103742 / CB 15) (Caulobacter crescentus).